Here is a 133-residue protein sequence, read N- to C-terminus: Antifungal protein ginkbilobin-like protein 1 (133 aa).

A signal peptide spans 1 to 24 (MSMGSFGFALAVMVLAVLVASAAG). One can recognise a Gnk2-homologous domain in the interval 28–133 (TNFVSSACNT…CFIRYEQYSI (106 aa)). Cystine bridges form between Cys35–Cys111, Cys87–Cys96, and Cys99–Cys124. Position 36 (Asn36) interacts with alpha-D-mannopyranose. The alpha-D-mannopyranose site is built by Arg118 and Glu129.

Functionally, exerts antifungal activity through its carbohydrate-binding specificity. The sequence is that of Antifungal protein ginkbilobin-like protein 1 from Picea sitchensis (Sitka spruce).